We begin with the raw amino-acid sequence, 314 residues long: L-lactate dehydrogenase (314 aa).

NAD(+)-binding positions include V16, D37, K42, Y68, and 82–83; that span reads GV. Residues Q85 and R91 each contribute to the substrate site. NAD(+) contacts are provided by residues S104, 121–123, and T146; that span reads ASN. 123-126 serves as a coordination point for substrate; it reads NPVD. 151–154 lines the substrate pocket; the sequence is DTTR. Residues R156 and H171 each contribute to the beta-D-fructose 1,6-bisphosphate site. H178 functions as the Proton acceptor in the catalytic mechanism. Y223 carries the phosphotyrosine modification. T232 provides a ligand contact to substrate.

This sequence belongs to the LDH/MDH superfamily. LDH family. In terms of assembly, homotetramer.

It is found in the cytoplasm. The catalysed reaction is (S)-lactate + NAD(+) = pyruvate + NADH + H(+). The protein operates within fermentation; pyruvate fermentation to lactate; (S)-lactate from pyruvate: step 1/1. With respect to regulation, allosterically activated by fructose 1,6-bisphosphate (FBP). Catalyzes the conversion of lactate to pyruvate. The sequence is that of L-lactate dehydrogenase from Lactococcus lactis subsp. cremoris (strain MG1363).